We begin with the raw amino-acid sequence, 338 residues long: Cytoskeleton protein RodZ (338 aa).

At 1–111 the chain is on the cytoplasmic side; it reads MNTEATHEEN…LGKSRKKRDG (111 aa). Positions 19–71 constitute an HTH cro/C1-type domain; the sequence is LRLAREQLGLSQQVVAERLCLKVSTVRDIEEDKAPADLASTFLRGYIRSYARL. Positions 30–49 form a DNA-binding region, H-T-H motif; it reads QQVVAERLCLKVSTVRDIEE. A helical; Signal-anchor for type II membrane protein transmembrane segment spans residues 112–132; the sequence is WLMSFTWLVLFVVVGLTGAWW. Over 133–338 the chain is Periplasmic; that stretch reads WQNHKAQQEE…TLNAEQSVTQ (206 aa). Polar residues-rich tracts occupy residues 147–180 and 189–214; these read ADQS…QDQA and GDTQ…SQQP. Positions 147–245 are disordered; the sequence is ADQSSAELSQ…AQSQLPVGQA (99 aa). Residues 220–239 show a composition bias toward low complexity; it reads SQANTDTAAQQNTTQPAQSQ.

The protein belongs to the RodZ family.

It is found in the cell inner membrane. Its function is as follows. Cytoskeletal protein that is involved in cell-shape control through regulation of the length of the long axis. In Cronobacter sakazakii (strain ATCC BAA-894) (Enterobacter sakazakii), this protein is Cytoskeleton protein RodZ.